The following is a 125-amino-acid chain: MKKSGVLFLLGIILLVLIGVQGTPVVRKGRCSCISTNQGTIHLQSLKDLKQFAPSPSCEKIEIIATLKNGVQTCLNPDSADVKELIKKWEKQVSQKKKQKNGKKHQKKKVLKVRKSQRSRQKKTT.

Positions 1 to 22 (MKKSGVLFLLGIILLVLIGVQG) are cleaved as a signal peptide. Intrachain disulfides connect C31–C58 and C33–C74. The interval 93 to 125 (VSQKKKQKNGKKHQKKKVLKVRKSQRSRQKKTT) is disordered. The segment covering 94–125 (SQKKKQKNGKKHQKKKVLKVRKSQRSRQKKTT) has biased composition (basic residues).

It belongs to the intercrine alpha (chemokine CxC) family.

It localises to the secreted. In terms of biological role, cytokine that affects the growth, movement, or activation state of cells that participate in immune and inflammatory response. Chemotactic for activated T-cells. Binds to CXCR3. The protein is C-X-C motif chemokine 9 (CXCL9) of Homo sapiens (Human).